The chain runs to 150 residues: 6,7-dimethyl-8-ribityllumazine synthase (150 aa).

5-amino-6-(D-ribitylamino)uracil contacts are provided by residues F11, 43 to 45 (VYD), and 67 to 69 (AVI). 72–73 (AT) is a binding site for (2S)-2-hydroxy-3-oxobutyl phosphate. The active-site Proton donor is the H75. L100 is a 5-amino-6-(D-ribitylamino)uracil binding site. (2S)-2-hydroxy-3-oxobutyl phosphate is bound at residue R115.

It belongs to the DMRL synthase family.

It catalyses the reaction (2S)-2-hydroxy-3-oxobutyl phosphate + 5-amino-6-(D-ribitylamino)uracil = 6,7-dimethyl-8-(1-D-ribityl)lumazine + phosphate + 2 H2O + H(+). Its pathway is cofactor biosynthesis; riboflavin biosynthesis; riboflavin from 2-hydroxy-3-oxobutyl phosphate and 5-amino-6-(D-ribitylamino)uracil: step 1/2. Functionally, catalyzes the formation of 6,7-dimethyl-8-ribityllumazine by condensation of 5-amino-6-(D-ribitylamino)uracil with 3,4-dihydroxy-2-butanone 4-phosphate. This is the penultimate step in the biosynthesis of riboflavin. In Pyrobaculum arsenaticum (strain DSM 13514 / JCM 11321 / PZ6), this protein is 6,7-dimethyl-8-ribityllumazine synthase.